A 144-amino-acid chain; its full sequence is uncharacterized protein (144 aa).

The interval 90–144 is disordered; it reads KKEYSALKKSGKIHKVGGSKSSGHRKTKKPKKSMKGGSKTKKLSEKQLMKELLAM. Basic residues predominate over residues 98-130; that stretch reads KSGKIHKVGGSKSSGHRKTKKPKKSMKGGSKTK.

This is an uncharacterized protein from Sputnik virophage.